The primary structure comprises 135 residues: Ribonuclease P protein component 2 (135 aa).

This sequence belongs to the eukaryotic/archaeal RNase P protein component 2 family. As to quaternary structure, consists of a catalytic RNA component and at least 4-5 protein subunits.

It localises to the cytoplasm. The catalysed reaction is Endonucleolytic cleavage of RNA, removing 5'-extranucleotides from tRNA precursor.. Its function is as follows. Part of ribonuclease P, a protein complex that generates mature tRNA molecules by cleaving their 5'-ends. This Methanococcus aeolicus (strain ATCC BAA-1280 / DSM 17508 / OCM 812 / Nankai-3) protein is Ribonuclease P protein component 2.